The sequence spans 64 residues: Protein translocase subunit SecE (64 aa).

A helical membrane pass occupies residues 35–55; sequence LVVLGTVAFITVFFAVVDYGI.

It belongs to the SecE/SEC61-gamma family. Component of the Sec protein translocase complex. Heterotrimer consisting of SecY, SecE and SecG subunits. The heterotrimers can form oligomers, although 1 heterotrimer is thought to be able to translocate proteins. Interacts with the ribosome. Interacts with SecDF, and other proteins may be involved. Interacts with SecA.

It localises to the cell membrane. In terms of biological role, essential subunit of the Sec protein translocation channel SecYEG. Clamps together the 2 halves of SecY. May contact the channel plug during translocation. The protein is Protein translocase subunit SecE of Halalkalibacterium halodurans (strain ATCC BAA-125 / DSM 18197 / FERM 7344 / JCM 9153 / C-125) (Bacillus halodurans).